The primary structure comprises 449 residues: MANVIVIGAQWGDEGKGKITDLLSRSADVVVRSQGGVNAGHTVVVQGQTFKLHLIPSGILYPDTECIIGSGTVIDPSVLLEEMEQLHALNVSTENLFISQTAHITMPYHRLIDRASEERRGKYKLGTTGRGIGPTYADKSERTGIRVVDLMNGDDLQEKIEWTINYKNAILEKLYNLSPLDPKQVIDEYRGYAEQLRSYVIDSSLKIYEAIQQKKNILFEGAQGTLLDLDHGTYPYVTSSNPIAGGACVGAGIGPTVIDRVIGVAKAYTTRVGEGPFPTELNGEIGELLCDRGAEFGTTTGRRRRCGWFDAVIGRYAVRINGIDCLAITKLDVLDELDEIEVCVAYELDGQICDHFPSDANQFARCQPIYRTLPGWKQSTTNCRSLEDLPKQALDYLKFLAEVMEVSIAIVSLGASRDQTIIVEDPIHGPKRALLDENGVPVSKADTQE.

GTP is bound by residues 12–18 (GDEGKGK) and 40–42 (GHT). The active-site Proton acceptor is the aspartate 13. Residues aspartate 13 and glycine 40 each contribute to the Mg(2+) site. Residues 13-16 (DEGK), 38-41 (NAGH), threonine 128, arginine 142, glutamine 223, threonine 238, and arginine 302 each bind IMP. Histidine 41 (proton donor) is an active-site residue. 298–304 (TTTGRRR) lines the substrate pocket. GTP contacts are provided by residues arginine 304, 330–332 (KLD), and 412–414 (SLG).

It belongs to the adenylosuccinate synthetase family. As to quaternary structure, homodimer. Requires Mg(2+) as cofactor.

The protein localises to the cytoplasm. It carries out the reaction IMP + L-aspartate + GTP = N(6)-(1,2-dicarboxyethyl)-AMP + GDP + phosphate + 2 H(+). It functions in the pathway purine metabolism; AMP biosynthesis via de novo pathway; AMP from IMP: step 1/2. Its function is as follows. Plays an important role in the de novo pathway of purine nucleotide biosynthesis. Catalyzes the first committed step in the biosynthesis of AMP from IMP. The protein is Adenylosuccinate synthetase of Gloeothece citriformis (strain PCC 7424) (Cyanothece sp. (strain PCC 7424)).